We begin with the raw amino-acid sequence, 363 residues long: sn-glycerol-3-phosphate import ATP-binding protein UgpC (363 aa).

The ABC transporter domain maps to 4-235; the sequence is VVLRNVRKTY…PATTFVASFI (232 aa). Residue 37–44 participates in ATP binding; the sequence is GPSGCGKS.

The protein belongs to the ABC transporter superfamily. sn-glycerol-3-phosphate importer (TC 3.A.1.1.3) family. As to quaternary structure, the complex is composed of two ATP-binding proteins (UgpC), two transmembrane proteins (UgpA and UgpE) and a solute-binding protein (UgpB).

It localises to the cell inner membrane. The catalysed reaction is sn-glycerol 3-phosphate(out) + ATP + H2O = sn-glycerol 3-phosphate(in) + ADP + phosphate + H(+). Functionally, part of the ABC transporter complex UgpBAEC involved in sn-glycerol-3-phosphate (G3P) import. Responsible for energy coupling to the transport system. The chain is sn-glycerol-3-phosphate import ATP-binding protein UgpC from Rhodopseudomonas palustris (strain ATCC BAA-98 / CGA009).